A 389-amino-acid chain; its full sequence is Chorismate synthase (389 aa).

NADP(+) is bound by residues Arg40 and Arg46. FMN-binding positions include 131 to 133 (RSS), 252 to 253 (NA), Gly297, 312 to 316 (KPIPT), and Arg338.

This sequence belongs to the chorismate synthase family. As to quaternary structure, homotetramer. The cofactor is FMNH2.

The catalysed reaction is 5-O-(1-carboxyvinyl)-3-phosphoshikimate = chorismate + phosphate. It functions in the pathway metabolic intermediate biosynthesis; chorismate biosynthesis; chorismate from D-erythrose 4-phosphate and phosphoenolpyruvate: step 7/7. In terms of biological role, catalyzes the anti-1,4-elimination of the C-3 phosphate and the C-6 proR hydrogen from 5-enolpyruvylshikimate-3-phosphate (EPSP) to yield chorismate, which is the branch point compound that serves as the starting substrate for the three terminal pathways of aromatic amino acid biosynthesis. This reaction introduces a second double bond into the aromatic ring system. The polypeptide is Chorismate synthase (Lactiplantibacillus plantarum (strain ATCC BAA-793 / NCIMB 8826 / WCFS1) (Lactobacillus plantarum)).